The sequence spans 206 residues: Somatotropin (206 aa).

The signal sequence occupies residues 1–22 (MAGLHFFPALLALLMASLQTHQ). 2 disulfides stabilise this stretch: Cys75–Cys179 and Cys196–Cys204.

This sequence belongs to the somatotropin/prolactin family.

It localises to the secreted. Its function is as follows. Growth hormone plays an important role in growth control and is involved in the regulation of several anabolic processes. Implicated as an osmoregulatory substance important for seawater adaptation. In Protopterus annectens (African lungfish), this protein is Somatotropin (gh).